A 286-amino-acid chain; its full sequence is Polyamine aminopropyltransferase (286 aa).

In terms of domain architecture, PABS spans 5-242; that stretch reads DNWFTEVLEE…GWWSATLASK (238 aa). S-methyl-5'-thioadenosine is bound at residue Gln-35. Residues His-66 and Asp-90 each coordinate spermidine. Residues Asp-110 and 141-142 each bind S-methyl-5'-thioadenosine; that span reads DG. Asp-160 serves as the catalytic Proton acceptor. 160-163 is a binding site for spermidine; that stretch reads DSTD.

It belongs to the spermidine/spermine synthase family. As to quaternary structure, homodimer or homotetramer.

It localises to the cytoplasm. The catalysed reaction is S-adenosyl 3-(methylsulfanyl)propylamine + putrescine = S-methyl-5'-thioadenosine + spermidine + H(+). It functions in the pathway amine and polyamine biosynthesis; spermidine biosynthesis; spermidine from putrescine: step 1/1. Catalyzes the irreversible transfer of a propylamine group from the amino donor S-adenosylmethioninamine (decarboxy-AdoMet) to putrescine (1,4-diaminobutane) to yield spermidine. This Alkalilimnicola ehrlichii (strain ATCC BAA-1101 / DSM 17681 / MLHE-1) protein is Polyamine aminopropyltransferase.